The chain runs to 961 residues: Roundabout homolog 4 (961 aa).

The signal sequence occupies residues 1–37 (MGQGEELRAAVDSGGMGLLGTKCPLPLLLLFIMGGKA). Ig-like C2-type domains follow at residues 42–142 (PQIL…ARLS) and 148–235 (EDFR…ARVS). 2 disulfides stabilise this stretch: C63–C125 and C169–C218. N-linked (GlcNAc...) asparagine glycosylation is found at N211 and N257. 2 consecutive Fibronectin type-III domains span residues 259–356 (TLLN…LPEQ) and 358–453 (PSAP…LEQA). N-linked (GlcNAc...) asparagine glycans are attached at residues N371, N400, and N407. Residues 544 to 559 (SGSRDLSSSSSLSSRL) show a composition bias toward low complexity. Disordered regions lie at residues 544-563 (SGSRDLSSSSSLSSRLGVDP) and 600-634 (QTSSPPVRPSPQTPAARRLPPKLTGTSSPWASSDS). The segment covering 623 to 634 (TGTSSPWASSDS) has biased composition (polar residues). 2 N-linked (GlcNAc...) asparagine glycosylation sites follow: N691 and N723. Residues 726 to 810 (ELAARPLPPT…SLEEEDQDSV (85 aa)) form a disordered region. Low complexity predominate over residues 755–769 (LQAPSSDPLPAAPLS). The segment covering 770-783 (VLNSSRPSSPQASF) has biased composition (polar residues). N-linked (GlcNAc...) asparagine glycosylation is found at N772 and N793. Residues 784 to 801 (LSVPSPGSSNLSSSSLSS) are compositionally biased toward low complexity. Residue S823 is modified to Phosphoserine.

This sequence belongs to the immunoglobulin superfamily. ROBO family. In terms of assembly, interacts with SLIT2 and ENAH.

Its function is as follows. Receptor for Slit proteins, at least for SLIT2, and seems to be involved in angiogenesis and vascular patterning. May mediate the inhibition of primary endothelial cell migration by Slit proteins. Involved in the maintenance of endothelial barrier organization and function. The sequence is that of Roundabout homolog 4 (Robo4) from Rattus norvegicus (Rat).